We begin with the raw amino-acid sequence, 81 residues long: RNA-binding protein Hfq (81 aa).

The Sm domain maps to 11–71; sequence DIFLNSARKN…VSTITPLRPI (61 aa).

The protein belongs to the Hfq family. In terms of assembly, homohexamer.

RNA chaperone that binds small regulatory RNA (sRNAs) and mRNAs to facilitate mRNA translational regulation in response to envelope stress, environmental stress and changes in metabolite concentrations. Also binds with high specificity to tRNAs. This is RNA-binding protein Hfq from Clostridium acetobutylicum (strain ATCC 824 / DSM 792 / JCM 1419 / IAM 19013 / LMG 5710 / NBRC 13948 / NRRL B-527 / VKM B-1787 / 2291 / W).